Consider the following 185-residue polypeptide: Ribosome-recycling factor (185 aa).

Belongs to the RRF family.

The protein resides in the cytoplasm. Functionally, responsible for the release of ribosomes from messenger RNA at the termination of protein biosynthesis. May increase the efficiency of translation by recycling ribosomes from one round of translation to another. This Nocardia farcinica (strain IFM 10152) protein is Ribosome-recycling factor.